Reading from the N-terminus, the 224-residue chain is UPF0758 protein VSAL_I0192 (224 aa).

The MPN domain maps to 102–224 (ALTSPEHTKR…IVSFAERGWI (123 aa)). 3 residues coordinate Zn(2+): H173, H175, and D186. Positions 173-186 (HNHPSGVAEPSQAD) match the JAMM motif motif.

This sequence belongs to the UPF0758 family.

This Aliivibrio salmonicida (strain LFI1238) (Vibrio salmonicida (strain LFI1238)) protein is UPF0758 protein VSAL_I0192.